The following is a 426-amino-acid chain: MHDIRAIRETPELYEKAWAAKGSPGKVAEILKLDEALRAAQTALQAAQAERNEASKKIGQAKAQKDEAEATRLMAHVETLKKALEEQGEVERSAGEALRALLAGLPNIPAAEVPDGADEHDNVEVRRWGEPRAIAAPKDHATLGEAMGLMDFEAAARMSGARFVVLKGQLARLERALGQFMLDLQTQEHGYTEVNPPLLVNDAAAYGTDKLPKFAEDLFQTTDGRWLIPTAEVPLTSLVMGQIVAEEELPLRYTALTPCFRSEAGASGRDTRGMIRQHQFNKVELVSITTPEQSADEHERMVGCAEAVLKRLELPFRTMLLCRGDMGFGARKTYDLEVWLPSQEKYREISSCSNTGDFQARRMDARAKKAGEKGTRYVHTLNGSGLAVGRTLVAVLENYQDEGGRIAIPEALRPYMPGMTHIGGAA.

230-232 (TAE) contributes to the L-serine binding site. 261–263 (RSE) is an ATP binding site. Glu284 contributes to the L-serine binding site. Position 348 to 351 (348 to 351 (EISS)) interacts with ATP. Residue Ser384 coordinates L-serine.

The protein belongs to the class-II aminoacyl-tRNA synthetase family. Type-1 seryl-tRNA synthetase subfamily. As to quaternary structure, homodimer. The tRNA molecule binds across the dimer.

It is found in the cytoplasm. It catalyses the reaction tRNA(Ser) + L-serine + ATP = L-seryl-tRNA(Ser) + AMP + diphosphate + H(+). The catalysed reaction is tRNA(Sec) + L-serine + ATP = L-seryl-tRNA(Sec) + AMP + diphosphate + H(+). It participates in aminoacyl-tRNA biosynthesis; selenocysteinyl-tRNA(Sec) biosynthesis; L-seryl-tRNA(Sec) from L-serine and tRNA(Sec): step 1/1. Functionally, catalyzes the attachment of serine to tRNA(Ser). Is also able to aminoacylate tRNA(Sec) with serine, to form the misacylated tRNA L-seryl-tRNA(Sec), which will be further converted into selenocysteinyl-tRNA(Sec). The protein is Serine--tRNA ligase of Phenylobacterium zucineum (strain HLK1).